Consider the following 252-residue polypeptide: Imidazole glycerol phosphate synthase subunit HisF (252 aa).

Catalysis depends on residues Asp-11 and Asp-130.

It belongs to the HisA/HisF family. As to quaternary structure, heterodimer of HisH and HisF.

The protein localises to the cytoplasm. The enzyme catalyses 5-[(5-phospho-1-deoxy-D-ribulos-1-ylimino)methylamino]-1-(5-phospho-beta-D-ribosyl)imidazole-4-carboxamide + L-glutamine = D-erythro-1-(imidazol-4-yl)glycerol 3-phosphate + 5-amino-1-(5-phospho-beta-D-ribosyl)imidazole-4-carboxamide + L-glutamate + H(+). It functions in the pathway amino-acid biosynthesis; L-histidine biosynthesis; L-histidine from 5-phospho-alpha-D-ribose 1-diphosphate: step 5/9. IGPS catalyzes the conversion of PRFAR and glutamine to IGP, AICAR and glutamate. The HisF subunit catalyzes the cyclization activity that produces IGP and AICAR from PRFAR using the ammonia provided by the HisH subunit. This Sulfurihydrogenibium sp. (strain YO3AOP1) protein is Imidazole glycerol phosphate synthase subunit HisF.